A 297-amino-acid chain; its full sequence is Glycerol-3-phosphate dehydrogenase [NAD(P)+] (297 aa).

NADPH contacts are provided by W11, R30, and K79. Sn-glycerol 3-phosphate is bound by residues K79, G107, and S109. A111 serves as a coordination point for NADPH. 5 residues coordinate sn-glycerol 3-phosphate: K161, D214, S224, R225, and N226. K161 (proton acceptor) is an active-site residue. R225 serves as a coordination point for NADPH. NADPH contacts are provided by V249 and E251.

This sequence belongs to the NAD-dependent glycerol-3-phosphate dehydrogenase family.

Its subcellular location is the cytoplasm. It carries out the reaction sn-glycerol 3-phosphate + NAD(+) = dihydroxyacetone phosphate + NADH + H(+). The catalysed reaction is sn-glycerol 3-phosphate + NADP(+) = dihydroxyacetone phosphate + NADPH + H(+). It participates in membrane lipid metabolism; glycerophospholipid metabolism. Its function is as follows. Catalyzes the reduction of the glycolytic intermediate dihydroxyacetone phosphate (DHAP) to sn-glycerol 3-phosphate (G3P), the key precursor for phospholipid synthesis. In Wolinella succinogenes (strain ATCC 29543 / DSM 1740 / CCUG 13145 / JCM 31913 / LMG 7466 / NCTC 11488 / FDC 602W) (Vibrio succinogenes), this protein is Glycerol-3-phosphate dehydrogenase [NAD(P)+].